A 361-amino-acid polypeptide reads, in one-letter code: Phospho-N-acetylmuramoyl-pentapeptide-transferase (361 aa).

A run of 10 helical transmembrane segments spans residues 27 to 47 (ILAS…MIRW), 70 to 90 (GTPT…CLLW), 97 to 117 (SLWL…VDDY), 134 to 154 (YFWQ…NASL), 167 to 187 (TVTW…IVGS), 199 to 219 (GLAI…AYAS), 236 to 256 (TGEL…FLWY), 263 to 283 (VFMG…VAVV), 288 to 308 (LVLL…ILQV), and 338 to 358 (KVIV…LATL).

It belongs to the glycosyltransferase 4 family. MraY subfamily. The cofactor is Mg(2+).

It is found in the cell inner membrane. The enzyme catalyses UDP-N-acetyl-alpha-D-muramoyl-L-alanyl-gamma-D-glutamyl-meso-2,6-diaminopimeloyl-D-alanyl-D-alanine + di-trans,octa-cis-undecaprenyl phosphate = di-trans,octa-cis-undecaprenyl diphospho-N-acetyl-alpha-D-muramoyl-L-alanyl-D-glutamyl-meso-2,6-diaminopimeloyl-D-alanyl-D-alanine + UMP. It participates in cell wall biogenesis; peptidoglycan biosynthesis. Its function is as follows. Catalyzes the initial step of the lipid cycle reactions in the biosynthesis of the cell wall peptidoglycan: transfers peptidoglycan precursor phospho-MurNAc-pentapeptide from UDP-MurNAc-pentapeptide onto the lipid carrier undecaprenyl phosphate, yielding undecaprenyl-pyrophosphoryl-MurNAc-pentapeptide, known as lipid I. The protein is Phospho-N-acetylmuramoyl-pentapeptide-transferase of Legionella pneumophila (strain Lens).